The following is a 727-amino-acid chain: Prolyl endopeptidase-like (727 aa).

Active-site charge relay system residues include S559, D645, and H690.

This sequence belongs to the peptidase S9A family. In terms of assembly, homodimer. Interacts with the AP-1 complex.

Its subcellular location is the cytoplasm. It localises to the cytosol. It is found in the golgi apparatus. The protein resides in the trans-Golgi network. The protein localises to the cytoskeleton. Its subcellular location is the nucleus. Functionally, serine peptidase whose precise substrate specificity remains unclear. Does not cleave peptides after a arginine or lysine residue. Regulates trans-Golgi network morphology and sorting by regulating the membrane binding of the AP-1 complex. May play a role in the regulation of synaptic vesicle exocytosis. The polypeptide is Prolyl endopeptidase-like (PREPL) (Pongo abelii (Sumatran orangutan)).